Here is a 431-residue protein sequence, read N- to C-terminus: Serine hydroxymethyltransferase (431 aa).

(6S)-5,6,7,8-tetrahydrofolate is bound by residues Leu-121 and 125–127 (GHL). Lys-230 is modified (N6-(pyridoxal phosphate)lysine). A (6S)-5,6,7,8-tetrahydrofolate-binding site is contributed by 369 to 371 (SPF).

It belongs to the SHMT family. In terms of assembly, homodimer. Requires pyridoxal 5'-phosphate as cofactor.

Its subcellular location is the cytoplasm. The enzyme catalyses (6R)-5,10-methylene-5,6,7,8-tetrahydrofolate + glycine + H2O = (6S)-5,6,7,8-tetrahydrofolate + L-serine. It functions in the pathway one-carbon metabolism; tetrahydrofolate interconversion. It participates in amino-acid biosynthesis; glycine biosynthesis; glycine from L-serine: step 1/1. Catalyzes the reversible interconversion of serine and glycine with tetrahydrofolate (THF) serving as the one-carbon carrier. This reaction serves as the major source of one-carbon groups required for the biosynthesis of purines, thymidylate, methionine, and other important biomolecules. Also exhibits THF-independent aldolase activity toward beta-hydroxyamino acids, producing glycine and aldehydes, via a retro-aldol mechanism. This is Serine hydroxymethyltransferase from Cytophaga hutchinsonii (strain ATCC 33406 / DSM 1761 / CIP 103989 / NBRC 15051 / NCIMB 9469 / D465).